Here is a 114-residue protein sequence, read N- to C-terminus: Chaperonin GroEL (114 aa).

An ATP-binding site is contributed by 22 to 26; the sequence is DGTTT.

The protein belongs to the chaperonin (HSP60) family. In terms of assembly, forms a cylinder of 14 subunits composed of two heptameric rings stacked back-to-back. Interacts with the co-chaperonin GroES.

It is found in the cytoplasm. It catalyses the reaction ATP + H2O + a folded polypeptide = ADP + phosphate + an unfolded polypeptide.. Together with its co-chaperonin GroES, plays an essential role in assisting protein folding. The GroEL-GroES system forms a nano-cage that allows encapsulation of the non-native substrate proteins and provides a physical environment optimized to promote and accelerate protein folding. The polypeptide is Chaperonin GroEL (Mycobacterium ulcerans).